Consider the following 255-residue polypeptide: Large ribosomal subunit protein uL4 (255 aa).

The protein belongs to the universal ribosomal protein uL4 family. In terms of assembly, part of the 50S ribosomal subunit.

One of the primary rRNA binding proteins, this protein initially binds near the 5'-end of the 23S rRNA. It is important during the early stages of 50S assembly. It makes multiple contacts with different domains of the 23S rRNA in the assembled 50S subunit and ribosome. In terms of biological role, forms part of the polypeptide exit tunnel. The polypeptide is Large ribosomal subunit protein uL4 (Pyrococcus horikoshii (strain ATCC 700860 / DSM 12428 / JCM 9974 / NBRC 100139 / OT-3)).